The sequence spans 177 residues: Thymidine kinase (177 aa).

11 to 18 (GPMFSGKS) lines the ATP pocket. E83 (proton acceptor) is an active-site residue. F113 contributes to the substrate binding site. 2 residues coordinate Zn(2+): C138 and C141. 157-161 (IEIIG) is a binding site for substrate. Positions 170 and 173 each coordinate Zn(2+).

It belongs to the thymidine kinase family. As to quaternary structure, homotetramer. Two molecules of substrate bind to each enzyme tetramer.

The enzyme catalyses thymidine + ATP = dTMP + ADP + H(+). Phosphorylates thymidine and thymidine analogs, such as azidothymidine (AZT). Part of the salvage pathway for pyrimidine deoxyribonucleotide synthesis. The sequence is that of Thymidine kinase (OPG101) from Variola virus (isolate Human/India/Ind3/1967) (VARV).